Here is a 457-residue protein sequence, read N- to C-terminus: Siroheme synthase (457 aa).

The tract at residues 1 to 204 is precorrin-2 dehydrogenase /sirohydrochlorin ferrochelatase; it reads MDHLPIFCQL…QDQQAVEETT (204 aa). NAD(+) contacts are provided by residues 22–23 and 43–44; these read DV and LA. Ser128 carries the phosphoserine modification. Positions 216-457 are uroporphyrinogen-III C-methyltransferase; it reads GEVVLVGAGP…REKLNWFSNH (242 aa). Pro225 is a binding site for S-adenosyl-L-methionine. Asp248 functions as the Proton acceptor in the catalytic mechanism. Lys270 (proton donor) is an active-site residue. Residues 301 to 303, Ile306, 331 to 332, Met382, and Gly411 each bind S-adenosyl-L-methionine; these read GGD and TA.

In the N-terminal section; belongs to the precorrin-2 dehydrogenase / sirohydrochlorin ferrochelatase family. This sequence in the C-terminal section; belongs to the precorrin methyltransferase family.

The catalysed reaction is uroporphyrinogen III + 2 S-adenosyl-L-methionine = precorrin-2 + 2 S-adenosyl-L-homocysteine + H(+). The enzyme catalyses precorrin-2 + NAD(+) = sirohydrochlorin + NADH + 2 H(+). It carries out the reaction siroheme + 2 H(+) = sirohydrochlorin + Fe(2+). The protein operates within cofactor biosynthesis; adenosylcobalamin biosynthesis; precorrin-2 from uroporphyrinogen III: step 1/1. It participates in cofactor biosynthesis; adenosylcobalamin biosynthesis; sirohydrochlorin from precorrin-2: step 1/1. It functions in the pathway porphyrin-containing compound metabolism; siroheme biosynthesis; precorrin-2 from uroporphyrinogen III: step 1/1. Its pathway is porphyrin-containing compound metabolism; siroheme biosynthesis; siroheme from sirohydrochlorin: step 1/1. The protein operates within porphyrin-containing compound metabolism; siroheme biosynthesis; sirohydrochlorin from precorrin-2: step 1/1. Functionally, multifunctional enzyme that catalyzes the SAM-dependent methylations of uroporphyrinogen III at position C-2 and C-7 to form precorrin-2 via precorrin-1. Then it catalyzes the NAD-dependent ring dehydrogenation of precorrin-2 to yield sirohydrochlorin. Finally, it catalyzes the ferrochelation of sirohydrochlorin to yield siroheme. This Enterobacter sp. (strain 638) protein is Siroheme synthase.